The chain runs to 990 residues: Kinesin-related protein 5 (990 aa).

The 325-residue stretch at 6-330 (NIRVMCRFRP…LKFGARAKSI (325 aa)) folds into the Kinesin motor domain. ATP is bound at residue 83–90 (GQTGSGKT). 2 disordered regions span residues 401–485 (QSNS…SSID) and 732–788 (FSSS…QDQQ). Residues 406–418 (SGGGGSGSSGGSS) are compositionally biased toward gly residues. 2 stretches are compositionally biased toward low complexity: residues 466 to 485 (TSSI…SSID) and 733 to 781 (SSSN…PSSN). Positions 513–948 (IEMEKMKEDT…DQLISTQRLI (436 aa)) form a coiled coil.

Belongs to the TRAFAC class myosin-kinesin ATPase superfamily. Kinesin family. Kinesin subfamily. As to quaternary structure, interacts with actin.

It localises to the cytoplasm. The protein localises to the cytoskeleton. Its function is as follows. Microtubule-associated force-producing protein that plays a role in organelle transport. Its motor activity is directed toward the microtubule's plus end. May connect microtubules to actin filaments. Associates with actin-based structures in cells and is likely involved in the organization of actin cytoskeletons in such structures. The sequence is that of Kinesin-related protein 5 (kif5) from Dictyostelium discoideum (Social amoeba).